Here is a 722-residue protein sequence, read N- to C-terminus: NCK-interacting protein with SH3 domain (722 aa).

One can recognise an SH3 domain in the interval 1-58; that stretch reads MYRALYAFRSAEPNALAFAAGETFLVLERSSAHWWLAARARSGETGYVPPAYLRRLQG. Disordered stretches follow at residues 101–122 and 149–286; these read KETL…SSTS and PSSE…ASDD. The span at 110 to 121 shows a compositional bias: low complexity; sequence SASSVAVMTSST. At serine 120 the chain carries Phosphoserine. The segment covering 169-185 has biased composition (pro residues); it reads QIPPQPRRAAPTTPPPP. The short motif at 175–192 is the Nuclear localization signal element; it reads RRAAPTTPPPPVKRRDRE. At threonine 181 the chain carries Phosphothreonine. Low complexity predominate over residues 206 to 240; that stretch reads PSGGNSVSSGSSVSSTSLDTLYTSSSPSEPGSSCS. At serine 294 the chain carries Phosphoserine.

In terms of assembly, associates with the intermediate filaments, vimentin and desmin. Binds the first and third SH3 domains of NCK. Binds the proline-rich domains of N-WASP through its SH3 domain. Similarly, binds diaphanous protein homolog 1 (DRF1). Binds the SH3 domains of GRB2 through its proline-rich domains. Interacts with Helicobacter pylori toxin vacA. Isoform 4 interacts with FHOD1. Interacts with FASLG. Interacts with TMIGD2. In terms of tissue distribution, highest expression in heart, brain, skeletal muscle, kidney and liver. Lower levels in placenta, lung, small intestine and leukocytes. Weak expression in colon, thymus and spleen.

It localises to the nucleus. In terms of biological role, has an important role in stress fiber formation induced by active diaphanous protein homolog 1 (DRF1). Induces microspike formation, in vivo. In vitro, stimulates N-WASP-induced ARP2/3 complex activation in the absence of CDC42. May play an important role in the maintenance of sarcomeres and/or in the assembly of myofibrils into sarcomeres. Implicated in regulation of actin polymerization and cell adhesion. Plays a role in angiogenesis. The protein is NCK-interacting protein with SH3 domain (NCKIPSD) of Homo sapiens (Human).